The following is a 179-amino-acid chain: Large ribosomal subunit protein uL5 (179 aa).

The protein belongs to the universal ribosomal protein uL5 family. Part of the 50S ribosomal subunit; part of the 5S rRNA/L5/L18/L25 subcomplex. Contacts the 5S rRNA and the P site tRNA. Forms a bridge to the 30S subunit in the 70S ribosome.

In terms of biological role, this is one of the proteins that bind and probably mediate the attachment of the 5S RNA into the large ribosomal subunit, where it forms part of the central protuberance. In the 70S ribosome it contacts protein S13 of the 30S subunit (bridge B1b), connecting the 2 subunits; this bridge is implicated in subunit movement. Contacts the P site tRNA; the 5S rRNA and some of its associated proteins might help stabilize positioning of ribosome-bound tRNAs. This is Large ribosomal subunit protein uL5 from Lawsonia intracellularis (strain PHE/MN1-00).